The primary structure comprises 107 residues: Phosphoribosyl-ATP pyrophosphatase (107 aa).

The protein belongs to the PRA-PH family.

It localises to the cytoplasm. The enzyme catalyses 1-(5-phospho-beta-D-ribosyl)-ATP + H2O = 1-(5-phospho-beta-D-ribosyl)-5'-AMP + diphosphate + H(+). It functions in the pathway amino-acid biosynthesis; L-histidine biosynthesis; L-histidine from 5-phospho-alpha-D-ribose 1-diphosphate: step 2/9. The chain is Phosphoribosyl-ATP pyrophosphatase from Bacillus cereus (strain ZK / E33L).